We begin with the raw amino-acid sequence, 408 residues long: Histone acetyltransferase type B subunit 2 (408 aa).

5 WD repeats span residues 120-160 (KHEQ…KDHG), 167-207 (YHKE…NKSP), 213-253 (VHTD…AIQK), 255-295 (SVSS…KPLH), and 299-339 (GHED…AEQQ). Residues 341-345 (DDAYD) are interaction with the histone H4 N-terminus. A WD 6 repeat occupies 356 to 396 (GHRSPVNEFSHNSNVPWLMCSVEEENVLQIWKPANKIVRPP).

The protein belongs to the WD repeat RBAP46/RBAP48/MSI1 family. In terms of assembly, component of the HAT-B complex composed of at least HAT1 and HAT2. The HAT-B complex binds to histone H4 tail.

It localises to the cytoplasm. The protein localises to the nucleus. Its function is as follows. Regulatory subunit of the histone acetylase B (HAT-B) complex. The complex acetylates 'Lys-12' of histone H4 which is required for telomeric silencing. In Kluyveromyces lactis (strain ATCC 8585 / CBS 2359 / DSM 70799 / NBRC 1267 / NRRL Y-1140 / WM37) (Yeast), this protein is Histone acetyltransferase type B subunit 2 (HAT2).